A 545-amino-acid polypeptide reads, in one-letter code: Adenine deaminase (545 aa).

It belongs to the metallo-dependent hydrolases superfamily. Adenine deaminase family. Mn(2+) serves as cofactor.

It catalyses the reaction adenine + H2O + H(+) = hypoxanthine + NH4(+). This chain is Adenine deaminase, found in Parabacteroides distasonis (strain ATCC 8503 / DSM 20701 / CIP 104284 / JCM 5825 / NCTC 11152).